The primary structure comprises 277 residues: MKQYLDLMRHVRDTGTKKEDRTGTGTVSVFGYQMRFDLSEGFPLVTTKKCHLKSIIHELLWFLKGETNTQYLTDNGVRIWNEWATEEGDLGPVYGAQWRSWPTPDGGSLDQFALLVEQIKNKPDSRRHIISAWNPALLPDEGVSPQDNVRNGKMALPPCHTLFQFYVADNKLSCQLYQRSADIFLGVPFNIASYALLTMMVAQVTGLELGDFVHTFGDAHLYLNHLEQVETQLAREPLPLPTMKINPEVKDIFSFKFEDFELVDYQAHPHISAPISI.

Arg-21 lines the dUMP pocket. His-51 serves as a coordination point for (6R)-5,10-methylene-5,6,7,8-tetrahydrofolate. A dUMP-binding site is contributed by 126–127; that stretch reads RR. Residue Cys-159 is the Nucleophile of the active site. DUMP contacts are provided by residues 179-182, Asn-190, and 220-222; these read RSAD and HLY. (6R)-5,10-methylene-5,6,7,8-tetrahydrofolate is bound at residue Asp-182. Ser-276 is a binding site for (6R)-5,10-methylene-5,6,7,8-tetrahydrofolate.

Belongs to the thymidylate synthase family. Bacterial-type ThyA subfamily. Homodimer.

It localises to the cytoplasm. It carries out the reaction dUMP + (6R)-5,10-methylene-5,6,7,8-tetrahydrofolate = 7,8-dihydrofolate + dTMP. It participates in pyrimidine metabolism; dTTP biosynthesis. Catalyzes the reductive methylation of 2'-deoxyuridine-5'-monophosphate (dUMP) to 2'-deoxythymidine-5'-monophosphate (dTMP) while utilizing 5,10-methylenetetrahydrofolate (mTHF) as the methyl donor and reductant in the reaction, yielding dihydrofolate (DHF) as a by-product. This enzymatic reaction provides an intracellular de novo source of dTMP, an essential precursor for DNA biosynthesis. In Saccharophagus degradans (strain 2-40 / ATCC 43961 / DSM 17024), this protein is Thymidylate synthase.